A 332-amino-acid chain; its full sequence is Ferredoxin--NADP reductase 1 (332 aa).

Positions 35, 43, 48, 88, 123, 284, and 325 each coordinate FAD.

This sequence belongs to the ferredoxin--NADP reductase type 2 family. In terms of assembly, homodimer. FAD serves as cofactor.

It catalyses the reaction 2 reduced [2Fe-2S]-[ferredoxin] + NADP(+) + H(+) = 2 oxidized [2Fe-2S]-[ferredoxin] + NADPH. The chain is Ferredoxin--NADP reductase 1 from Listeria welshimeri serovar 6b (strain ATCC 35897 / DSM 20650 / CCUG 15529 / CIP 8149 / NCTC 11857 / SLCC 5334 / V8).